A 66-amino-acid polypeptide reads, in one-letter code: Large ribosomal subunit protein uL29 (66 aa).

The protein belongs to the universal ribosomal protein uL29 family.

The chain is Large ribosomal subunit protein uL29 from Ruegeria pomeroyi (strain ATCC 700808 / DSM 15171 / DSS-3) (Silicibacter pomeroyi).